We begin with the raw amino-acid sequence, 269 residues long: Protein TIFY 11B (269 aa).

Positions 100 to 135 constitute a Tify domain; that stretch reads PESGNSQLTIFFGGKVMVFNEFPEDKAKEIMEVAKE. The segment at 160 to 181 is disordered; the sequence is PDLNEPTSSGNNEDQETGQQHQ. Residues 164–181 show a composition bias toward polar residues; the sequence is EPTSSGNNEDQETGQQHQ. Positions 186–210 match the Jas motif; the sequence is IARRASLHRFFAKRKDRAVARAPYQ. The Nuclear localization signal motif lies at 187 to 194; sequence ARRASLHR. The interval 209-269 is disordered; sequence YQVNQHGSHL…QSSKNLELKL (61 aa). Positions 250 to 269 are enriched in basic and acidic residues; the sequence is MPMEVDKKEGQSSKNLELKL.

It belongs to the TIFY/JAZ family. As to quaternary structure, homo- and heterodimer. Interacts with MYC2, AFPH2/NINJA, TIFY10A/JAZ1, TIFY10B/JAZ2, TIFY11A/JAZ5, TIFY5A/JAZ8, TIFY9/JAZ10 and TIFY3B/JAZ12. (Microbial infection) Interacts with the pathogenic Pseudomonas syringae HopZ1a protein. (Microbial infection) Acetylated by Pseudomonas syringae HopZ1a. In terms of processing, ubiquitinated. Targeted for degradation by the SCF(COI1) E3 ubiquitin ligase-proteasome pathway during jasmonate signaling.

It localises to the nucleus. Its subcellular location is the cell membrane. Repressor of jasmonate responses. This Arabidopsis thaliana (Mouse-ear cress) protein is Protein TIFY 11B.